The following is a 259-amino-acid chain: uncharacterized protein (259 aa).

This sequence belongs to the BtpA family.

This is an uncharacterized protein from Pyrococcus horikoshii (strain ATCC 700860 / DSM 12428 / JCM 9974 / NBRC 100139 / OT-3).